The sequence spans 2057 residues: Fer-1-like protein 5 (2057 aa).

C2 domains are found at residues 1–99 (MLRL…VLFV), 152–265 (PGST…TLLR), 308–425 (DDTD…EGVY), 1057–1188 (DTRP…MRWH), 1213–1346 (KLGE…AQDY), 1467–1587 (PKPP…AHCG), and 1705–1853 (GPPG…KQCS). Residues D1502, D1508, D1557, F1558, D1559, S1562, D1565, D1824, S1827, and D1830 each coordinate Ca(2+). A helical membrane pass occupies residues 1962–1982 (LIAFMVISIIALMLFNFIYSA).

This sequence belongs to the ferlin family. As to quaternary structure, interacts (via second C2 domain) with EHD1 and EHD2. Requires Ca(2+) as cofactor.

It is found in the cell membrane. The protein resides in the membrane. Plays a role in myoblast fusion; probable mediator of endocytic recycling for membrane trafficking events during myotube formation. The sequence is that of Fer-1-like protein 5 (FER1L5) from Homo sapiens (Human).